The primary structure comprises 413 residues: Histidine--tRNA ligase (413 aa).

The protein belongs to the class-II aminoacyl-tRNA synthetase family. Homodimer.

Its subcellular location is the cytoplasm. It catalyses the reaction tRNA(His) + L-histidine + ATP = L-histidyl-tRNA(His) + AMP + diphosphate + H(+). This chain is Histidine--tRNA ligase (hisS), found in Rickettsia prowazekii (strain Madrid E).